The sequence spans 559 residues: Pentatricopeptide repeat-containing protein At1g08610 (559 aa).

PPR repeat units follow at residues 103–137, 138–172, 173–207, 208–242, 243–277, 278–312, 313–347, 348–382, 383–417, 418–452, 453–487, 488–522, and 523–557; these read DEET…NQVP, HFPS…GGVP, DTIT…GSPP, DVIT…GCPP, FMIT…GCYP, DIVT…GLEL, NTVT…SYCP, TVIT…KCLP, DIVT…CCPP, GLIT…GIFP, DDIT…GNGI, RGST…GCKP, and DETI…KLLK.

This sequence belongs to the PPR family. P subfamily.

The polypeptide is Pentatricopeptide repeat-containing protein At1g08610 (Arabidopsis thaliana (Mouse-ear cress)).